We begin with the raw amino-acid sequence, 309 residues long: Carbamate kinase (309 aa).

It belongs to the carbamate kinase family.

The protein resides in the cytoplasm. It catalyses the reaction hydrogencarbonate + NH4(+) + ATP = carbamoyl phosphate + ADP + H2O + H(+). Its pathway is metabolic intermediate metabolism; carbamoyl phosphate degradation; CO(2) and NH(3) from carbamoyl phosphate: step 1/1. The polypeptide is Carbamate kinase (arcC) (Staphylococcus haemolyticus (strain JCSC1435)).